Reading from the N-terminus, the 247-residue chain is UPF0259 membrane protein BU276 (247 aa).

6 consecutive transmembrane segments (helical) span residues 20 to 40 (IGAIFFISIFATFMNILIDMF), 85 to 105 (IMESLISKTTLLGSIIILISV), 114 to 134 (IVSSIRTFFLFFPSLFILNFL), 137 to 157 (FIIQIGFMLLIIPGILLSIIL), 188 to 208 (IIGPGVLFWMCGKFILTMLLA), and 218 to 238 (LFLISNISMNILFSILIIYLF).

Belongs to the UPF0259 family.

The protein resides in the cell membrane. This is UPF0259 membrane protein BU276 from Buchnera aphidicola subsp. Acyrthosiphon pisum (strain APS) (Acyrthosiphon pisum symbiotic bacterium).